The sequence spans 221 residues: tRNA (guanine-N(7)-)-methyltransferase (221 aa).

S-adenosyl-L-methionine contacts are provided by E43, E68, and D123. The active site involves D123. Substrate is bound by residues K127, D159, and 199–202 (TEYE).

Belongs to the class I-like SAM-binding methyltransferase superfamily. TrmB family.

The enzyme catalyses guanosine(46) in tRNA + S-adenosyl-L-methionine = N(7)-methylguanosine(46) in tRNA + S-adenosyl-L-homocysteine. The protein operates within tRNA modification; N(7)-methylguanine-tRNA biosynthesis. In terms of biological role, catalyzes the formation of N(7)-methylguanine at position 46 (m7G46) in tRNA. In Mycoplasma mycoides subsp. mycoides SC (strain CCUG 32753 / NCTC 10114 / PG1), this protein is tRNA (guanine-N(7)-)-methyltransferase.